A 277-amino-acid chain; its full sequence is Energy-coupling factor transporter transmembrane protein EcfT (277 aa).

6 helical membrane-spanning segments follow: residues 39 to 59 (ITILFIWAIFLANNPITYAII), 61 to 81 (FFCFLAIIATGLKARVFWNGV), 85 to 105 (IGLIFFTSLLQLFFMTGGHVF), 121 to 141 (AIYIFIRFTLIILISTVMTVT), 163 to 183 (VPVDEIALVISIALRFVPTLF), and 254 to 274 (SKYDLISLAYFILLVGLLLIF).

This sequence belongs to the energy-coupling factor EcfT family. In terms of assembly, forms a stable energy-coupling factor (ECF) transporter complex composed of 2 membrane-embedded substrate-binding proteins (S component), 2 ATP-binding proteins (A component) and 2 transmembrane proteins (T component). May be able to interact with more than 1 S component at a time.

It is found in the cell membrane. In terms of biological role, transmembrane (T) component of an energy-coupling factor (ECF) ABC-transporter complex. Unlike classic ABC transporters this ECF transporter provides the energy necessary to transport a number of different substrates. This chain is Energy-coupling factor transporter transmembrane protein EcfT, found in Lactobacillus helveticus (strain DPC 4571).